A 508-amino-acid polypeptide reads, in one-letter code: Photosystem II CP47 reaction center protein (508 aa).

6 helical membrane-spanning segments follow: residues 21-36 (AVHIMHTALVSGWAGS), 101-115 (IVFSGLCFLAAIWHW), 140-156 (GIHLFLSGLACFGFGAF), 203-218 (IAAGTLGILAGLFHLS), 237-252 (VLSSSIAAVFFAAFVV), and 457-472 (SFALLFFFGHIWHGAR).

The protein belongs to the PsbB/PsbC family. PsbB subfamily. As to quaternary structure, PSII is composed of 1 copy each of membrane proteins PsbA, PsbB, PsbC, PsbD, PsbE, PsbF, PsbH, PsbI, PsbJ, PsbK, PsbL, PsbM, PsbT, PsbX, PsbY, PsbZ, Psb30/Ycf12, at least 3 peripheral proteins of the oxygen-evolving complex and a large number of cofactors. It forms dimeric complexes. Binds multiple chlorophylls. PSII binds additional chlorophylls, carotenoids and specific lipids. is required as a cofactor.

The protein localises to the plastid. The protein resides in the chloroplast thylakoid membrane. One of the components of the core complex of photosystem II (PSII). It binds chlorophyll and helps catalyze the primary light-induced photochemical processes of PSII. PSII is a light-driven water:plastoquinone oxidoreductase, using light energy to abstract electrons from H(2)O, generating O(2) and a proton gradient subsequently used for ATP formation. The chain is Photosystem II CP47 reaction center protein from Nandina domestica (Heavenly bamboo).